The following is a 196-amino-acid chain: Peptidyl-tRNA hydrolase (196 aa).

A tRNA-binding site is contributed by Tyr-17. Residue His-22 is the Proton acceptor of the active site. Residues Phe-68, Asn-70, and Asn-116 each contribute to the tRNA site.

The protein belongs to the PTH family. Monomer.

It is found in the cytoplasm. It carries out the reaction an N-acyl-L-alpha-aminoacyl-tRNA + H2O = an N-acyl-L-amino acid + a tRNA + H(+). In terms of biological role, hydrolyzes ribosome-free peptidyl-tRNAs (with 1 or more amino acids incorporated), which drop off the ribosome during protein synthesis, or as a result of ribosome stalling. Catalyzes the release of premature peptidyl moieties from peptidyl-tRNA molecules trapped in stalled 50S ribosomal subunits, and thus maintains levels of free tRNAs and 50S ribosomes. This Serratia proteamaculans (strain 568) protein is Peptidyl-tRNA hydrolase.